A 188-amino-acid polypeptide reads, in one-letter code: Adenine phosphoribosyltransferase (188 aa).

It belongs to the purine/pyrimidine phosphoribosyltransferase family. Homodimer.

The protein localises to the cytoplasm. It catalyses the reaction AMP + diphosphate = 5-phospho-alpha-D-ribose 1-diphosphate + adenine. It participates in purine metabolism; AMP biosynthesis via salvage pathway; AMP from adenine: step 1/1. Functionally, catalyzes a salvage reaction resulting in the formation of AMP, that is energically less costly than de novo synthesis. This chain is Adenine phosphoribosyltransferase, found in Salinispora tropica (strain ATCC BAA-916 / DSM 44818 / JCM 13857 / NBRC 105044 / CNB-440).